The primary structure comprises 426 residues: mRNA cap guanine-N(7) methyltransferase (426 aa).

The 284-residue stretch at 138–421 folds into the mRNA cap 0 methyltransferase domain; the sequence is SPIIKLRNFN…FYTTFAFRKV (284 aa). Residue 147 to 148 participates in mRNA binding; it reads NN. Residues K151, A169, D191, D220, Q246, and Y251 each contribute to the S-adenosyl-L-methionine site.

The protein belongs to the class I-like SAM-binding methyltransferase superfamily. mRNA cap 0 methyltransferase family.

Its subcellular location is the nucleus. The enzyme catalyses a 5'-end (5'-triphosphoguanosine)-ribonucleoside in mRNA + S-adenosyl-L-methionine = a 5'-end (N(7)-methyl 5'-triphosphoguanosine)-ribonucleoside in mRNA + S-adenosyl-L-homocysteine. Functionally, responsible for methylating the 5'-cap structure of mRNAs. The protein is mRNA cap guanine-N(7) methyltransferase (ABD1) of Kluyveromyces lactis (strain ATCC 8585 / CBS 2359 / DSM 70799 / NBRC 1267 / NRRL Y-1140 / WM37) (Yeast).